The chain runs to 256 residues: Ribonuclease 3 (256 aa).

The region spanning 3 to 125 is the RNase III domain; it reads LDALQQRLGY…IVGAVFLDAG (123 aa). A Mg(2+)-binding site is contributed by E38. D42 is an active-site residue. Positions 111 and 114 each coordinate Mg(2+). The active site involves E114. In terms of domain architecture, DRBM spans 152 to 222; sequence DAKTLLQEYL…AKLALDEVQK (71 aa). The segment at 230 to 256 is disordered; it reads RSRAERTGKTRKQPVPQDPQLSLRLKE.

The protein belongs to the ribonuclease III family. In terms of assembly, homodimer. The cofactor is Mg(2+).

It localises to the cytoplasm. The catalysed reaction is Endonucleolytic cleavage to 5'-phosphomonoester.. In terms of biological role, digests double-stranded RNA. Involved in the processing of primary rRNA transcript to yield the immediate precursors to the large and small rRNAs (23S and 16S). Processes some mRNAs, and tRNAs when they are encoded in the rRNA operon. Processes pre-crRNA and tracrRNA of type II CRISPR loci if present in the organism. This Cupriavidus necator (strain ATCC 17699 / DSM 428 / KCTC 22496 / NCIMB 10442 / H16 / Stanier 337) (Ralstonia eutropha) protein is Ribonuclease 3.